We begin with the raw amino-acid sequence, 564 residues long: Dihydropyrimidinase-related protein 5 (564 aa).

A phosphothreonine mark is found at Thr-509 and Thr-514. 2 positions are modified to phosphoserine: Ser-532 and Ser-538. Arg-559 bears the Omega-N-methylarginine mark.

The protein belongs to the metallo-dependent hydrolases superfamily. Hydantoinase/dihydropyrimidinase family. In terms of assembly, homotetramer, and heterotetramer with other DPYS-like proteins. Interacts with DPYSL2, DPYSL3 and DPYSL4. Interacts with MAP2 and TUBB3. Highly expressed in embryonic and early postnatal brain and spinal cord.

The protein resides in the cytoplasm. Its function is as follows. Involved in the negative regulation of dendrite outgrowth. The protein is Dihydropyrimidinase-related protein 5 (Dpysl5) of Rattus norvegicus (Rat).